A 536-amino-acid chain; its full sequence is MSKKILYGKEARKALLQGVDAIANTVKVTLGPKGRNVILEKAYESPAIVNDGVSIAKEIELKNPYQNMGAKLVYEVASKTNDKAGDGTTTATVLAQSMIHRGFDAIDAGANPVLVKEGIELASLTVAKKLLAKSKKVDDQEDIQNVASVSSGSQEIGKIIAQAMQKVGKDGVINVDESKGFETELEVVEGLQYDKGYASPYFVSDRESMTVHLENALVLVTDHKISTVQEIVPILEEVVKASRPLLIVAEAVENEVLGVLVANKLRGTFNVVVTNAPGFGDNQKEMLKDIAVLTKANFVFKDLNMKLADLKMDDLGNINKVIIKKDNTTLISNSKSPELEKRIQLLKTQIKNSTSDYETKNLQERLAKLSGGVALIKVGAATDTELKDKKLRIEDALNATKAAITEGIVVGGGKALVEVYQELKDTLVSDNKEVQQGIDLVVQSLLVPTYQIAYNAGFSGKDVVKQQLLQPSNFGFNAKEGKYVCLLKEGIIDPTKVTRQAVINAASISALMITTEAAVVSFKENKDNNFDLGTQE.

Residues 29–32 (TLGP), 86–90 (DGTTT), Gly-412, and Asp-493 contribute to the ATP site.

The protein belongs to the chaperonin (HSP60) family. As to quaternary structure, forms a cylinder of 14 subunits composed of two heptameric rings stacked back-to-back. Interacts with the co-chaperonin GroES.

It is found in the cytoplasm. The enzyme catalyses ATP + H2O + a folded polypeptide = ADP + phosphate + an unfolded polypeptide.. Together with its co-chaperonin GroES, plays an essential role in assisting protein folding. The GroEL-GroES system forms a nano-cage that allows encapsulation of the non-native substrate proteins and provides a physical environment optimized to promote and accelerate protein folding. The polypeptide is Chaperonin GroEL (Aster yellows witches'-broom phytoplasma (strain AYWB)).